Here is a 459-residue protein sequence, read N- to C-terminus: Cysteine--tRNA ligase (459 aa).

Position 28 (Cys28) interacts with Zn(2+). The 'HIGH' region signature appears at 30-40 (MTVYDFCHLGH). Cys209, His234, and Glu238 together coordinate Zn(2+). Positions 266 to 270 (KMAKS) match the 'KMSKS' region motif. Lys269 provides a ligand contact to ATP. The disordered stretch occupies residues 440–459 (QARGIELEDTPEGTKWRRTR).

It belongs to the class-I aminoacyl-tRNA synthetase family. As to quaternary structure, monomer. The cofactor is Zn(2+).

It localises to the cytoplasm. The catalysed reaction is tRNA(Cys) + L-cysteine + ATP = L-cysteinyl-tRNA(Cys) + AMP + diphosphate. The chain is Cysteine--tRNA ligase from Halorhodospira halophila (strain DSM 244 / SL1) (Ectothiorhodospira halophila (strain DSM 244 / SL1)).